Reading from the N-terminus, the 78-residue chain is UPF0270 protein PC1_3850 (78 aa).

It belongs to the UPF0270 family.

This Pectobacterium carotovorum subsp. carotovorum (strain PC1) protein is UPF0270 protein PC1_3850.